Here is a 231-residue protein sequence, read N- to C-terminus: Small ribosomal subunit protein uS5 (231 aa).

The 64-residue stretch at Lys-61–Val-124 folds into the S5 DRBM domain.

This sequence belongs to the universal ribosomal protein uS5 family. In terms of assembly, part of the 30S ribosomal subunit. Contacts protein S4.

Its function is as follows. With S4 and S12 plays an important role in translational accuracy. This Nanoarchaeum equitans (strain Kin4-M) protein is Small ribosomal subunit protein uS5.